A 274-amino-acid polypeptide reads, in one-letter code: Hydroxyethylthiazole kinase (274 aa).

Met49 is a substrate binding site. Residues Arg125 and Thr173 each coordinate ATP. Gly200 is a substrate binding site.

Belongs to the Thz kinase family. The cofactor is Mg(2+).

The catalysed reaction is 5-(2-hydroxyethyl)-4-methylthiazole + ATP = 4-methyl-5-(2-phosphooxyethyl)-thiazole + ADP + H(+). It functions in the pathway cofactor biosynthesis; thiamine diphosphate biosynthesis; 4-methyl-5-(2-phosphoethyl)-thiazole from 5-(2-hydroxyethyl)-4-methylthiazole: step 1/1. Its function is as follows. Catalyzes the phosphorylation of the hydroxyl group of 4-methyl-5-beta-hydroxyethylthiazole (THZ). The protein is Hydroxyethylthiazole kinase of Desulfosudis oleivorans (strain DSM 6200 / JCM 39069 / Hxd3) (Desulfococcus oleovorans).